A 42-amino-acid chain; its full sequence is uncharacterized protein (42 aa).

The helical transmembrane segment at 5–27 (FLHTNITIIPHSVLYVSLSYYII) threads the bilayer.

It localises to the membrane. This is an uncharacterized protein from Saccharomyces cerevisiae (strain ATCC 204508 / S288c) (Baker's yeast).